The following is a 309-amino-acid chain: Methionyl-tRNA formyltransferase (309 aa).

Position 112–115 (112–115) interacts with (6S)-5,6,7,8-tetrahydrofolate; it reads SLLP.

Belongs to the Fmt family.

The catalysed reaction is L-methionyl-tRNA(fMet) + (6R)-10-formyltetrahydrofolate = N-formyl-L-methionyl-tRNA(fMet) + (6S)-5,6,7,8-tetrahydrofolate + H(+). Functionally, attaches a formyl group to the free amino group of methionyl-tRNA(fMet). The formyl group appears to play a dual role in the initiator identity of N-formylmethionyl-tRNA by promoting its recognition by IF2 and preventing the misappropriation of this tRNA by the elongation apparatus. The sequence is that of Methionyl-tRNA formyltransferase from Bartonella bacilliformis (strain ATCC 35685 / KC583 / Herrer 020/F12,63).